Consider the following 259-residue polypeptide: Binding partner of ACD11 1 (259 aa).

Positions 6–77 (RSVKVGNLSS…QSVIIELAPN (72 aa)) constitute an RRM domain. Positions 219-259 (GEVGQKTKEKVEAEQPSQPAQSQQQLPEGYSPIHSSEYSKN) are disordered. Residues 232–243 (EQPSQPAQSQQQ) are compositionally biased toward low complexity.

In terms of assembly, interacts with ACD11, PR1F2 and PR1F3.

Its subcellular location is the cytoplasm. The protein resides in the membrane. This Arabidopsis thaliana (Mouse-ear cress) protein is Binding partner of ACD11 1 (BPA1).